A 26-amino-acid chain; its full sequence is Aldehyde dehydrogenase beta chain (26 aa).

As to quaternary structure, heterotrimer composed of an alpha, a beta and a gamma chain. The cofactor is FAD.

The enzyme catalyses an aldehyde + a quinone + H2O = a quinol + a carboxylate + H(+). This is Aldehyde dehydrogenase beta chain from Amycolatopsis methanolica.